An 80-amino-acid polypeptide reads, in one-letter code: Myocilin opposite strand protein (80 aa).

A disordered region spans residues 53-80; the sequence is EQAPPPHRTYLTVPPAPPPSPAEDPTVS.

This chain is Myocilin opposite strand protein, found in Homo sapiens (Human).